Here is a 63-residue protein sequence, read N- to C-terminus: Large ribosomal subunit protein uL29 (63 aa).

The protein belongs to the universal ribosomal protein uL29 family.

This Alcanivorax borkumensis (strain ATCC 700651 / DSM 11573 / NCIMB 13689 / SK2) protein is Large ribosomal subunit protein uL29.